The sequence spans 1856 residues: Protein TANC1 (1856 aa).

M1 is modified (N-acetylmethionine). Disordered stretches follow at residues 1–45 (MLKA…LSTT), 58–130 (SMSL…SCSP), 203–222 (KSPC…KDSG), 262–296 (RADN…PVPY), and 437–489 (IASS…RPRE). Over residues 8-21 (KSREGGKGSKKEAG) the composition is skewed to basic and acidic residues. Polar residues predominate over residues 29–45 (PALSSSGDSPVNSLSTT). Phosphoserine is present on residues S60, S63, S64, S204, S267, and S462. Positions 60-77 (SLPSSPLLPRQSLLTQSR) are enriched in low complexity. Residues 203–216 (KSPCETISSPSSTL) show a composition bias toward polar residues. The segment covering 439-475 (SSSPSLSPKSSDPTQDLPGTPLLSPSSSTSALSVTRT) has biased composition (low complexity). 11 ANK repeats span residues 893–925 (EGLS…NVNY), 931–960 (NNAP…CLDG), 964–993 (NGMN…RVDH), 997–1026 (KGQC…SAGP), 1037–1066 (ALQQ…EHEI), 1075–1104 (WGET…AVSR), 1108–1137 (RGVP…DVNL), 1141–1170 (QGRT…ALSS), 1174–1203 (EGLS…EIDQ), 1207–1236 (NGRT…VIEH), and 1240–1269 (SGMR…KLGN). TPR repeat units lie at residues 1286–1319 (LQKL…FPRE), 1333–1366 (VSLY…KPKS), and 1368–1400 (EAFY…CPNN). Low complexity predominate over residues 1417 to 1426 (LQRNQQQKQQ). Disordered stretches follow at residues 1417–1597 (LQRN…FGDR), 1636–1720 (DMAP…NTPF), and 1832–1856 (HVST…ESNV). A phosphoserine mark is found at S1436 and S1463. The span at 1454–1463 (EEAEEEDTSS) shows a compositional bias: acidic residues. 2 stretches are compositionally biased toward polar residues: residues 1490 to 1505 (EGLQ…QSRA) and 1524 to 1556 (PTKQ…VSSQ). The segment covering 1656–1686 (SLSSSGSSGSPSSSIKMSSSTSSLTSSSSVS) has biased composition (low complexity). Phosphoserine occurs at positions 1665, 1673, and 1674.

It belongs to the TANC family. As to quaternary structure, interacts probably directly with DLG1, DLG4, HOMER1. Interacts with DLGAP1, INA, CAMK2A, GRIN2B and GRIA1. Interacts with TNIK and MINK1. In terms of processing, phosphorylated; by MINK1 and TNIK upon stimulation by RAP2A.

It localises to the postsynaptic density. May be a scaffold component in the postsynaptic density. This is Protein TANC1 (Tanc1) from Mus musculus (Mouse).